The primary structure comprises 78 residues: Small integral membrane protein 5 (78 aa).

The helical transmembrane segment at 32-52 threads the bilayer; sequence ILAFSVLVVFTATVVLLLLIA.

It is found in the membrane. The protein is Small integral membrane protein 5 (SMIM5) of Bos taurus (Bovine).